A 389-amino-acid polypeptide reads, in one-letter code: Glutamate 5-kinase (389 aa).

Lys26 provides a ligand contact to ATP. The substrate site is built by Ser66, Asp153, and Asn167. 187-188 (TD) contacts ATP. The 79-residue stretch at 293–371 (AGTLFLDQGA…EQIEWILGHR (79 aa)) folds into the PUA domain.

It belongs to the glutamate 5-kinase family.

Its subcellular location is the cytoplasm. The enzyme catalyses L-glutamate + ATP = L-glutamyl 5-phosphate + ADP. It participates in amino-acid biosynthesis; L-proline biosynthesis; L-glutamate 5-semialdehyde from L-glutamate: step 1/2. In terms of biological role, catalyzes the transfer of a phosphate group to glutamate to form L-glutamate 5-phosphate. The polypeptide is Glutamate 5-kinase (Rhodopirellula baltica (strain DSM 10527 / NCIMB 13988 / SH1)).